We begin with the raw amino-acid sequence, 585 residues long: Vacuolar protein 8 (585 aa).

A lipid anchor (N-myristoyl glycine) is attached at G2. Residues C4, C5, and C7 are each lipidated (S-palmitoyl cysteine). 9 ARM repeats span residues 39-76 (NRSD…FAEI), 77-116 (TEKD…NLAV), 118-157 (TENK…NLAT), 159-198 (DDNK…NMTH), 200-239 (GENR…NIAV), 243-282 (NRKK…NLAS), 284-323 (SGYQ…NISI), 325-365 (PLNE…NLAA), and 409-448 (DDLK…NLCS). Residues 531-562 (QIGQTTTTTTTNITNNNTNTNTNTNTTTSTSN) are compositionally biased toward low complexity. The segment at 531–565 (QIGQTTTTTTTNITNNNTNTNTNTNTTTSTSNEDQ) is disordered.

Belongs to the beta-catenin family.

Its subcellular location is the vacuole membrane. Functions in both vacuole inheritance and protein targeting from the cytoplasm to vacuole. Vacuole inheritance has a role in the regulation of hyphal cell division. The polypeptide is Vacuolar protein 8 (VAC8) (Candida albicans (strain SC5314 / ATCC MYA-2876) (Yeast)).